The primary structure comprises 3414 residues: Genome polyprotein (3414 aa).

A disordered region spans residues 1-27 (MAGKAVLKGKGGGPPRRASKVAPKKTR). At 1–98 (MAGKAVLKGK…LHRRGSRRTT (98 aa)) the chain is on the cytoplasmic side. The span at 17–27 (RASKVAPKKTR) shows a compositional bias: basic residues. The propeptide at 97–117 (TTIDWMTPLLITVMLGMCLTA) is ER anchor for the capsid protein C, removed in mature form by serine protease NS3. The helical transmembrane segment at 99 to 117 (IDWMTPLLITVMLGMCLTA) threads the bilayer. Residues 118–242 (TVRRERDGSM…HLTRVEGWVW (125 aa)) are Extracellular-facing. N144 carries an N-linked (GlcNAc...) asparagine; by host glycan. A helical transmembrane segment spans residues 243–260 (KNKLFTLSLVMVAWLMVD). Residue G261 is a topological domain, cytoplasmic. Residues 262–280 (LLPRILIVVVALALVPAYA) traverse the membrane as a helical segment. Residues 281 to 727 (SRCTHLENRD…HTVLGGAFNT (447 aa)) lie on the Extracellular side of the membrane. 6 disulfides stabilise this stretch: C283–C310, C340–C396, C340–C401, C354–C385, C372–C396, and C372–C401. The interval 378–391 (DRGWGNHCGLFGKG) is fusion peptide. N434 carries N-linked (GlcNAc...) asparagine; by host glycosylation. 2 disulfide bridges follow: C466–C570 and C587–C618. The helical transmembrane segment at 728–748 (LLGGVGFLPKILLGVAMAWLG) threads the bilayer. Over 749-755 (LNMRNPT) the chain is Cytoplasmic. The helical transmembrane segment at 756 to 776 (LSMGFLLSGGLVLAMTLGVGA) threads the bilayer. Residues 777-1187 (DVGCAVDTER…LVSVESLFRY (411 aa)) lie on the Extracellular side of the membrane. Intrachain disulfides connect C780-C791, C831-C920, C955-C1000, C1057-C1106, C1068-C1090, and C1089-C1093. 3 N-linked (GlcNAc...) asparagine; by host glycosylation sites follow: N861, N983, and N999. A helical transmembrane segment spans residues 1188-1208 (LVAVGLVFQLELGPEAVAMVL). The Cytoplasmic segment spans residues 1209-1232 (LQAVFEMRTCLLSGFVLRRSITTR). The helical transmembrane segment at 1233–1253 (EIVTVYFLLLVLEMGIPVKGL) threads the bilayer. Residues 1254–1267 (EHLWRWTDALAMGA) are Lumenal-facing. The chain crosses the membrane as a helical span at residues 1268–1288 (IIFRACTAEGKTGIGLLLAAF). The Cytoplasmic segment spans residues 1289-1300 (MTQSDMNIIHDG). The helical transmembrane segment at 1301 to 1319 (LTAFLCVATTMAIWRYIRG) threads the bilayer. The Lumenal portion of the chain corresponds to 1320 to 1325 (QGERKG). The helical transmembrane segment at 1326–1346 (LTWIVPLAGILGGEGSGVRLL) threads the bilayer. Residues 1347-1359 (AFWELAASRGRRS) lie on the Cytoplasmic side of the membrane. The helical transmembrane segment at 1360-1378 (FNEPMTVIGVMLTLASGMM) threads the bilayer. At 1379–1382 (RHTS) the chain is on the lumenal side. A helical transmembrane segment spans residues 1383-1403 (QEAVCAMALAAFLLLMLTLGT). Residues 1404 to 1454 (RKMQLLAEWSGNIEWNPELTSEGGEVSLRVRQDALGNLHLTELEKEERMMA) are Cytoplasmic-facing. The segment at 1410-1449 (AEWSGNIEWNPELTSEGGEVSLRVRQDALGNLHLTELEKE) is interacts with and activates NS3 protease. The helical intramembrane region spans 1455–1475 (FWLVVGLIASAFHWSGILIVM). The Cytoplasmic segment spans residues 1476–2160 (GLWTISEMLG…RIGERDAPEA (685 aa)). Residues 1490 to 1669 (TDLVFSGCSE…EVEKSRPNLP (180 aa)) form the Peptidase S7 domain. Active-site charge relay system; for serine protease NS3 activity residues include H1543, D1567, and S1627. In terms of domain architecture, Helicase ATP-binding spans 1675–1831 (TGWTAKGQIT…ESNGAIASEE (157 aa)). 1688–1695 (MHPGSGKT) serves as a coordination point for ATP. The DEAH box motif lies at 1779-1782 (DEAH). In terms of domain architecture, Helicase C-terminal spans 1841 to 2000 (DGFDWITEYE…TARGPVATFY (160 aa)). K1883 carries the post-translational modification N6-acetyllysine; by host. A helical membrane pass occupies residues 2161-2181 (FLTAVEMLVLGLATLGVVWCF). The Lumenal segment spans residues 2182 to 2189 (VVRTSVSR). The helical intramembrane region spans 2190–2209 (MVLGTLVLATSLIFLWAGGV). A topological domain (lumenal) is located at residue G2210. Residues 2211–2231 (YGNMAGVALVFYTLLTVLQPE) form a helical membrane-spanning segment. The Cytoplasmic portion of the chain corresponds to 2232–2238 (TGKQRSS). The helical transmembrane segment at 2239 to 2259 (DDNKLAYFLLTLCGLAGMVAA) threads the bilayer. The Lumenal segment spans residues 2260–2296 (NEMGLLEKTKADLAALFARDQGETVRWGEWTNLDIQP). An intramembrane region (helical) is located at residues 2297–2315 (ARSWGTYVLVVSLFTPYML). The Lumenal segment spans residues 2316-2343 (HQLQTRIQQLVNSAVASGAQAMRDLGGG). Residues 2344-2364 (TPFFGVAGHVLALGVASLVGA) constitute an intramembrane region (helical). Topologically, residues 2365–2368 (TPTS) are lumenal. The chain crosses the membrane as a helical span at residues 2369–2389 (LILGVGLAAFHLAIVVSGLEA). Topologically, residues 2390 to 2432 (ELTQRAHKVFFSAMVRNPMVDGDVINPFGDGEAKPALYERKLS) are cytoplasmic. A helical transmembrane segment spans residues 2433–2453 (LILALVLCLASVVMNRTFVAV). Residues 2454–2477 (TEAGAVGVAAAMQLLRPEMDVLWT) lie on the Lumenal side of the membrane. The chain crosses the membrane as a helical span at residues 2478–2498 (MPVACGMSGVVRGSLWGLLPL). Residues 2499–3414 (GHRLWLRTTG…WELKLESSIF (916 aa)) lie on the Cytoplasmic side of the membrane. The 265-residue stretch at 2512–2776 (GGSEGDTLGD…EIDLGVGTRS (265 aa)) folds into the mRNA cap 0-1 NS5-type MT domain. An S-adenosyl-L-methionine-binding site is contributed by S2567. Residue S2567 is modified to Phosphoserine. The active-site For 2'-O-MTase activity is K2572. S-adenosyl-L-methionine contacts are provided by G2597, W2598, T2615, I2616, D2642, and V2643. D2657 acts as the For 2'-O-MTase activity in catalysis. I2658 contributes to the S-adenosyl-L-methionine binding site. Catalysis depends on for 2'-O-MTase activity residues K2694 and E2730. The segment at 2730–2734 (EMYFS) is interaction with host SCRIB. Y2732 contributes to the S-adenosyl-L-methionine binding site. E2950, H2954, C2959, and C2962 together coordinate Zn(2+). The region spanning 3040-3189 (GLFYADDTAG…RPVDDRFSKA (150 aa)) is the RdRp catalytic domain. Zn(2+)-binding residues include H3224, C3240, and C3359.

The protein in the N-terminal section; belongs to the class I-like SAM-binding methyltransferase superfamily. mRNA cap 0-1 NS5-type methyltransferase family. Homodimer. Interacts (via N-terminus) with host EXOC1 (via C-terminus); this interaction results in EXOC1 degradation through the proteasome degradation pathway. As to quaternary structure, forms heterodimers with envelope protein E in the endoplasmic reticulum and Golgi. In terms of assembly, homodimer; in the endoplasmic reticulum and Golgi. Interacts with protein prM. Interacts with non-structural protein 1. Homodimer; Homohexamer when secreted. Interacts with envelope protein E. As to quaternary structure, interacts (via N-terminus) with serine protease NS3. In terms of assembly, forms a heterodimer with serine protease NS3. May form homooligomers. Forms a heterodimer with NS2B. Interacts with non-structural protein 2A (via N-terminus). Interacts with NS4B. Interacts with unphosphorylated RNA-directed RNA polymerase NS5; this interaction stimulates RNA-directed RNA polymerase NS5 guanylyltransferase activity. As to quaternary structure, interacts with serine protease NS3. Interacts with NS1. In terms of assembly, homodimer. Interacts with host STAT2; this interaction inhibits the phosphorylation of the latter, and, when all viral proteins are present (polyprotein), targets STAT2 for degradation. Interacts with serine protease NS3. Interacts with host SCRIB; this interaction targets NS5 to the cell membrane periphery and nucleus, thereby allowing efficient host nuclear STAT1 inhibition. Specific enzymatic cleavages in vivo yield mature proteins. Cleavages in the lumen of endoplasmic reticulum are performed by host signal peptidase, whereas cleavages in the cytoplasmic side are performed by serine protease NS3. Signal cleavage at the 2K-4B site requires a prior NS3 protease-mediated cleavage at the 4A-2K site. In terms of processing, cleaved in post-Golgi vesicles by a host furin, releasing the mature small envelope protein M, and peptide pr. This cleavage is incomplete as up to 30% of viral particles still carry uncleaved prM. Post-translationally, N-glycosylated. N-glycosylated. The excreted form is glycosylated and this is required for efficient secretion of the protein from infected cells. In terms of processing, acetylated by host KAT5. Acetylation modulates NS3 RNA-binding and unwinding activities and plays an important positive role for viral replication. Post-translationally, phosphorylated on serines residues. This phosphorylation may trigger NS5 nuclear localization.

Its subcellular location is the virion. The protein resides in the host nucleus. The protein localises to the host cytoplasm. It localises to the host perinuclear region. It is found in the secreted. Its subcellular location is the virion membrane. The protein resides in the host endoplasmic reticulum membrane. It carries out the reaction Selective hydrolysis of -Xaa-Xaa-|-Yaa- bonds in which each of the Xaa can be either Arg or Lys and Yaa can be either Ser or Ala.. The catalysed reaction is RNA(n) + a ribonucleoside 5'-triphosphate = RNA(n+1) + diphosphate. The enzyme catalyses a ribonucleoside 5'-triphosphate + H2O = a ribonucleoside 5'-diphosphate + phosphate + H(+). It catalyses the reaction ATP + H2O = ADP + phosphate + H(+). It carries out the reaction a 5'-end (5'-triphosphoguanosine)-ribonucleoside in mRNA + S-adenosyl-L-methionine = a 5'-end (N(7)-methyl 5'-triphosphoguanosine)-ribonucleoside in mRNA + S-adenosyl-L-homocysteine. The catalysed reaction is a 5'-end (N(7)-methyl 5'-triphosphoguanosine)-ribonucleoside in mRNA + S-adenosyl-L-methionine = a 5'-end (N(7)-methyl 5'-triphosphoguanosine)-(2'-O-methyl-ribonucleoside) in mRNA + S-adenosyl-L-homocysteine + H(+). Its function is as follows. Plays a role in virus budding by binding to membrane and gathering the viral RNA into a nucleocapsid that forms the core of a mature virus particle. During virus entry, may induce genome penetration in host cytoplasm after hemifusion induced by surface proteins. Can migrate to the cell nucleus where it modulates host functions. Inhibits RNA silencing by interfering with host Dicer. Functionally, prevents premature fusion activity of envelope proteins in trans-Golgi by binding to envelope protein E at pH6.0. After virion release in extracellular space gets dissociated from E dimers. In terms of biological role, acts as a chaperone for envelope protein E during intracellular virion assembly by masking and inactivating envelope protein E fusion peptide. prM is the only viral peptide matured by host furin in the trans-Golgi network. Presumably to avoid catastrophic activation of the viral fusion activity in acidic GolGi compartment prior to virion release. prM-E cleavage is ineficient, and many virions are only partially matured. These uncleaved prM would play a role in immune evasion. Its function is as follows. May play a role in virus budding. Exerts cytotoxic effects by activating a mitochondrial apoptotic pathway through M extodomain. May display a viroporin activity. Binds to host cell surface receptor and mediates fusion between viral and cellular membranes. Envelope protein is synthesized in the endoplasmic reticulum in the form of heterodimer with protein prM. They play a role in virion budding in the ER, and the newly formed immature particle is covered with 60 spikes composed of heterodimer between precursor prM and envelope protein E. The virion is transported to the Golgi apparatus where the low pH causes dissociation of PrM-E heterodimers and formation of E homodimers. prM-E cleavage is ineficient, and many virions are only partially matured. These uncleaved prM would play a role in immune evasion. Functionally, involved in immune evasion, pathogenesis and viral replication. Once cleaved off the polyprotein, is targeted to three destinations: the viral replication cycle, the plasma membrane and the extracellular compartment. Essential for viral replication. Required for formation of the replication complex and recruitment of other non-structural proteins to the ER-derived membrane structures. Excreted as a hexameric lipoparticle that plays a role against host immune response. Antagonizing the complement function. Binds to the host macrophages and dendritic cells. Inhibits signal transduction originating from Toll-like receptor 3 (TLR3). In terms of biological role, component of the viral RNA replication complex that functions in virion assembly and antagonizes the host immune response. Its function is as follows. Required cofactor for the serine protease function of NS3. May have membrane-destabilizing activity and form viroporins. Displays three enzymatic activities: serine protease, NTPase and RNA helicase. NS3 serine protease, in association with NS2B, performs its autocleavage and cleaves the polyprotein at dibasic sites in the cytoplasm: C-prM, NS2A-NS2B, NS2B-NS3, NS3-NS4A, NS4A-2K and NS4B-NS5. NS3 RNA helicase binds RNA and unwinds dsRNA in the 3' to 5' direction. Functionally, regulates the ATPase activity of the NS3 helicase activity. NS4A allows NS3 helicase to conserve energy during unwinding. In terms of biological role, functions as a signal peptide for NS4B and is required for the interferon antagonism activity of the latter. Its function is as follows. Induces the formation of ER-derived membrane vesicles where the viral replication takes place. Inhibits interferon (IFN)-induced host STAT1 phosphorylation and nuclear translocation, thereby preventing the establishment of cellular antiviral state by blocking the IFN-alpha/beta pathway. Inhibits STAT2 translocation in the nucleus after IFN-alpha treatment. Replicates the viral (+) and (-) genome, and performs the capping of genomes in the cytoplasm. NS5 methylates viral RNA cap at guanine N-7 and ribose 2'-O positions. Besides its role in genome replication, also prevents the establishment of cellular antiviral state by blocking the interferon-alpha/beta (IFN-alpha/beta) signaling pathway. Inhibits host TYK2 and STAT2 phosphorylation, thereby preventing activation of JAK-STAT signaling pathway. The protein is Genome polyprotein of Homo sapiens (Human).